A 274-amino-acid chain; its full sequence is Protein TIC 20-I, chloroplastic (274 aa).

The N-terminal 65 residues, 1 to 65, are a transit peptide targeting the chloroplast; that stretch reads MITGYSTPSA…ELPRVSRGVP (65 aa). The next 4 membrane-spanning stretches (helical) occupy residues 130 to 152, 167 to 187, 200 to 220, and 229 to 249; these read LPYL…LHPF, IGRL…LGIV, VVMG…SKWM, and FGMH…LESI.

It belongs to the Tic20 family. As to quaternary structure, part of the Tic complex. Component of the 1-MD complex, composed of TIC20-I, TIC214, TIC100 and TIC56. Interacts with the translocating preproteins. Hydrolysis of ATP is essential for the formation of this complex. The 1-MD complex interacts with TIC21. In terms of tissue distribution, expressed in leaves, shoots and roots. High expression in mature photosynthetic tissues. Lower levels in non-photosynthetic tissues and roots.

Its subcellular location is the plastid. The protein resides in the chloroplast inner membrane. Functionally, involved in protein precursor import into chloroplasts. May be part of an intermediate translocation complex acting as a protein-conducting channel at the inner envelope. Seems to be specific for photosynthesis-related pre-proteins. Partially redundant with TIC20-IV, but not with TIC20-II or TIC20-V. The chain is Protein TIC 20-I, chloroplastic from Arabidopsis thaliana (Mouse-ear cress).